We begin with the raw amino-acid sequence, 173 residues long: Mesencephalic astrocyte-derived neurotrophic factor homolog (173 aa).

Positions 1–22 (MNTSQIVLMFCLVVGVAQTALA) are cleaved as a signal peptide. 4 disulfides stabilise this stretch: Cys-28/Cys-114, Cys-31/Cys-103, Cys-61/Cys-72, and Cys-148/Cys-151.

The protein belongs to the ARMET family.

Its subcellular location is the secreted. Required during the maturation of the embryonic nervous system for maintenance of neuronal and cuticular connectivity. Essential for maintenance of dopaminergic neurons and dopamine levels. This chain is Mesencephalic astrocyte-derived neurotrophic factor homolog, found in Drosophila grimshawi (Hawaiian fruit fly).